We begin with the raw amino-acid sequence, 86 residues long: Elicitor peptide 5 (86 aa).

The propeptide occupies 1-59 (MQQERDHKRDCCKLMPQTVKAFFKCLRFRRSSSSSSDMVKARARNEEKEEPSSIETSTR). The disordered stretch occupies residues 31 to 86 (SSSSSSDMVKARARNEEKEEPSSIETSTRSLNVMRKGIRKQPVSSGKRGGVNDYDM). Residues 39–51 (VKARARNEEKEEP) are compositionally biased toward basic and acidic residues.

The protein belongs to the brassicaceae elicitor peptide family.

In terms of biological role, elicitor of plant defense. This chain is Elicitor peptide 5 (PEP5), found in Arabidopsis thaliana (Mouse-ear cress).